Here is a 210-residue protein sequence, read N- to C-terminus: Large ribosomal subunit protein uL22 (210 aa).

Positions 123-210 are disordered; it reads NEMTSKETVK…TKSTKKEGSK (88 aa). The span at 126-157 shows a compositional bias: basic and acidic residues; the sequence is TSKETVKEPAKKPSAKVEKPAEAKAPKQETST. The span at 158–185 shows a compositional bias: low complexity; the sequence is KKPTTTTESKPKTSKAPAQKQAAKVAKP.

The protein belongs to the universal ribosomal protein uL22 family. In terms of assembly, part of the 50S ribosomal subunit.

This protein binds specifically to 23S rRNA; its binding is stimulated by other ribosomal proteins, e.g. L4, L17, and L20. It is important during the early stages of 50S assembly. It makes multiple contacts with different domains of the 23S rRNA in the assembled 50S subunit and ribosome. In terms of biological role, the globular domain of the protein is located near the polypeptide exit tunnel on the outside of the subunit, while an extended beta-hairpin is found that lines the wall of the exit tunnel in the center of the 70S ribosome. This chain is Large ribosomal subunit protein uL22, found in Metamycoplasma arthritidis (strain 158L3-1) (Mycoplasma arthritidis).